A 273-amino-acid chain; its full sequence is DnaJ homolog subfamily C member 27-A (273 aa).

Residues 23 to 30 (GNAEVGKS), 71 to 75 (DMAGH), and 134 to 137 (NKID) contribute to the GTP site. The J domain maps to 217–273 (DSWDMLGVKPGATRDEVNKAYRKLAVLLHPDKCMAPGSEDAFKAVVNARTALLKNIK).

This sequence belongs to the small GTPase superfamily. Rab family.

The protein resides in the nucleus. Functionally, GTPase possibly involved in regulation of the MEK/ERK pathway. This is DnaJ homolog subfamily C member 27-A (dnajc27-a) from Xenopus laevis (African clawed frog).